A 392-amino-acid polypeptide reads, in one-letter code: Galactokinase (392 aa).

33-36 is a binding site for substrate; the sequence is EHTD. Residues Ser-67 and 129-135 each bind ATP; that span reads GSGLSSS. Mg(2+)-binding residues include Ser-135 and Glu-167. Asp-179 functions as the Proton acceptor in the catalytic mechanism. Tyr-229 contacts substrate.

It belongs to the GHMP kinase family. GalK subfamily.

It is found in the cytoplasm. It catalyses the reaction alpha-D-galactose + ATP = alpha-D-galactose 1-phosphate + ADP + H(+). It participates in carbohydrate metabolism; galactose metabolism. Its function is as follows. Catalyzes the transfer of the gamma-phosphate of ATP to D-galactose to form alpha-D-galactose-1-phosphate (Gal-1-P). This chain is Galactokinase, found in Limosilactobacillus reuteri (strain DSM 20016) (Lactobacillus reuteri).